Consider the following 213-residue polypeptide: Ribonuclease HII (213 aa).

An RNase H type-2 domain is found at 1–213; it reads MKIIGIDEAG…SWKTAQKFIQ (213 aa). Residues aspartate 7, glutamate 8, and aspartate 105 each coordinate a divalent metal cation.

The protein belongs to the RNase HII family. Mn(2+) is required as a cofactor. It depends on Mg(2+) as a cofactor.

It is found in the cytoplasm. The catalysed reaction is Endonucleolytic cleavage to 5'-phosphomonoester.. Functionally, endonuclease that specifically degrades the RNA of RNA-DNA hybrids. This is Ribonuclease HII from Methanococcoides burtonii (strain DSM 6242 / NBRC 107633 / OCM 468 / ACE-M).